The primary structure comprises 365 residues: Histidinol-phosphate aminotransferase (365 aa).

N6-(pyridoxal phosphate)lysine is present on lysine 222.

This sequence belongs to the class-II pyridoxal-phosphate-dependent aminotransferase family. Histidinol-phosphate aminotransferase subfamily. Homodimer. Pyridoxal 5'-phosphate is required as a cofactor.

It catalyses the reaction L-histidinol phosphate + 2-oxoglutarate = 3-(imidazol-4-yl)-2-oxopropyl phosphate + L-glutamate. The protein operates within amino-acid biosynthesis; L-histidine biosynthesis; L-histidine from 5-phospho-alpha-D-ribose 1-diphosphate: step 7/9. The polypeptide is Histidinol-phosphate aminotransferase (Geobacillus thermodenitrificans (strain NG80-2)).